A 1147-amino-acid polypeptide reads, in one-letter code: MGLLLLILASAVLGSFLTLLAQFLLLYRRQPEPRADEAARAGDGFRYLKPVPGLPLREYLYGGGAEELAACSSEAGASSTPTPDSPAPPTLETCYFLNATILFLFRELRDTALARRWVTKKIKVEFEELLQTKTAGRLLEGLSLRDVFLGDTVPFIKTIRLVRPVVASGTGEPDDPDGDALPATCPEELAFEAEVEYNGGFHLAIDVDLVFGKSAYLFVKLSRVVGRLRFVLTRVPFTHWFFSFVEDPLIDFEVRSQFEGRPMPQLTSIIVNQLKKIIKRKHTLPSYKIRFKPFFPYQALQGFEEDEELIHIQQWALTEGRLKVTLLECSRLFIFGSYDRETNVHCTLELSSGVWEEKQRSSIKTVELIKGNLQSVGLTLRLVQSTDGYAGHVIIETVAPNSPAAMADLQRGDRLIAIGGVKITSTLQVLKLIKQAGDRVLVYYQRPAGQSSQDSLGQLEESFLSSSCQAAYEEDAAGLSADTENRDLDSEFEDLASDVRVQTELKEETQPLSHSPKRTPTTLSIKPLGAISPVLNRKLISGIHPPPQKLPSKEGNKPSTLKTSETTEAAQVSKPQGPTFKPPVPPRPQGRVPLPPTDTSAQADPEAPEKPDKVLLPPPPADKPAEKQVKSVDQGEDVAAGKQSSAKQEGVKDLPSESSAPTKDSSDDPQMWESSEVLYRNKVGKWSRTRASCVFDIEACHRYLNIALWCRDPFKLGGLICLGHVSLKLEEVALGCLATSNMEYLTKFRLEPPTPKAMVTRTALRNLSMQKGFNDKFCFGDITIHFKYLKEGEPDHHIVPNVEKEKELHLVEEVSTLPKEEHFVGQMSLSENKHSFQDTQFQNPTWCDYCKKKVWTKAASQCMFCAYVCHKKCQEKCLAETPLCGATERRIDRTLKNLRLEGQDPLLGLPPRVEIEANKSVNKTTGLTRHIINTSSRLLNLRQVSKTRLSEPGTDLVEPSPKHTPNTSDNEGSDTEVCGSNSPSKRGNSAGIKLMRKEGGLDDSVFIAVKEIGRDLYRGLPTEERIQKLEFMLDKLQNEIDQELEHNNSLVREEKETNDTRKKSVLSAALAKSGERLQALTLLMIHYRAGIEDIETLENLSLDQHSKKMNKYADDTEEDLDSEISQLIDSQPFSNISDDLFGPSESV.

A helical membrane pass occupies residues 2-24; sequence GLLLLILASAVLGSFLTLLAQFL. Residues 87–293 form the SMP-LTD domain; that stretch reads APPTLETCYF…LPSYKIRFKP (207 aa). The region spanning 365–448 is the PDZ domain; the sequence is TVELIKGNLQ…RVLVYYQRPA (84 aa). 3 positions are modified to phosphoserine: serine 490, serine 515, and serine 532. Residues 504 to 673 form a disordered region; that stretch reads ELKEETQPLS…DSSDDPQMWE (170 aa). Residues 510–524 show a composition bias toward polar residues; it reads QPLSHSPKRTPTTLS. Residues 557–576 show a composition bias toward polar residues; the sequence is KPSTLKTSETTEAAQVSKPQ. Residues 580 to 596 are compositionally biased toward pro residues; sequence FKPPVPPRPQGRVPLPP. The segment at 833-884 adopts a Phorbol-ester/DAG-type zinc-finger fold; that stretch reads KHSFQDTQFQNPTWCDYCKKKVWTKAASQCMFCAYVCHKKCQEKCLAETPLC. The interval 948 to 990 is disordered; that stretch reads RLSEPGTDLVEPSPKHTPNTSDNEGSDTEVCGSNSPSKRGNSA. 2 positions are modified to phosphoserine: serine 960 and serine 973. Residues 978–987 are compositionally biased toward polar residues; the sequence is CGSNSPSKRG. The stretch at 1021–1056 forms a coiled coil; it reads PTEERIQKLEFMLDKLQNEIDQELEHNNSLVREEKE. Residues 1126–1137 show a composition bias toward polar residues; sequence QLIDSQPFSNIS. Positions 1126–1147 are disordered; it reads QLIDSQPFSNISDDLFGPSESV.

Interacts with MSN.

The protein resides in the endoplasmic reticulum membrane. In terms of biological role, molecular tethering protein that connects endoplasmic reticulum and mitochondria membranes. PDZD8-dependent endoplasmic reticulum-mitochondria membrane tethering is essential for endoplasmic reticulum-mitochondria Ca(2+) transfer. In neurons, involved in the regulation of dendritic Ca(2+) dynamics by regulating mitochondrial Ca(2+) uptake in neurons. The polypeptide is PDZ domain-containing protein 8 (Mus musculus (Mouse)).